The sequence spans 94 residues: Co-chaperonin GroES (94 aa).

The protein belongs to the GroES chaperonin family. In terms of assembly, heptamer of 7 subunits arranged in a ring. Interacts with the chaperonin GroEL.

It is found in the cytoplasm. Functionally, together with the chaperonin GroEL, plays an essential role in assisting protein folding. The GroEL-GroES system forms a nano-cage that allows encapsulation of the non-native substrate proteins and provides a physical environment optimized to promote and accelerate protein folding. GroES binds to the apical surface of the GroEL ring, thereby capping the opening of the GroEL channel. This is Co-chaperonin GroES from Parageobacillus thermoglucosidasius (Geobacillus thermoglucosidasius).